Here is an 85-residue protein sequence, read N- to C-terminus: Large ribosomal subunit protein bL27 (85 aa).

The interval 1–20 (MAHKKGASSSRNGRDSNAQR) is disordered. The segment covering 7-19 (ASSSRNGRDSNAQ) has biased composition (polar residues).

It belongs to the bacterial ribosomal protein bL27 family.

The sequence is that of Large ribosomal subunit protein bL27 from Kineococcus radiotolerans (strain ATCC BAA-149 / DSM 14245 / SRS30216).